The primary structure comprises 297 residues: uncharacterized protein (297 aa).

Disordered stretches follow at residues 1-20 (MDTL…NADV), 39-100 (IEKD…ENLG), and 174-297 (VQKA…NEDQ). One can recognise an RRM domain in the interval 101 to 179 (NDLFVSGIAS…RVLNVQKAKR (79 aa)). Residue S184 is modified to Phosphoserine. Composition is skewed to basic and acidic residues over residues 209–223 (GGYR…DSNR) and 233–253 (PQRE…DSRP). Residues 254–263 (RRERHFHGRS) show a composition bias toward basic residues. Positions 287-297 (SHSSVPPNEDQ) are enriched in polar residues.

Its subcellular location is the nucleus. This is an uncharacterized protein from Schizosaccharomyces pombe (strain 972 / ATCC 24843) (Fission yeast).